Here is a 331-residue protein sequence, read N- to C-terminus: Cytosolic sulfotransferase 1 (331 aa).

Residue 74-79 coordinates 3'-phosphoadenylyl sulfate; the sequence is KSGTTW. Histidine 143 functions as the Proton acceptor in the catalytic mechanism. 3'-phosphoadenylyl sulfate contacts are provided by residues arginine 165, serine 173, tyrosine 231, and 297 to 299; that span reads RKG.

The protein belongs to the sulfotransferase 1 family.

The protein resides in the cytoplasm. Functionally, sulfotransferase that utilizes 3'-phospho-5'-adenylyl sulfate (PAPS) as sulfonate donor. In Arabidopsis thaliana (Mouse-ear cress), this protein is Cytosolic sulfotransferase 1 (SOT1).